The following is a 257-amino-acid chain: Global transcriptional regulator CodY (257 aa).

Positions 1-155 are GAF domain; that stretch reads MSLLSKTREL…AATVIGMEIL (155 aa). GTP contacts are provided by Val-22, Phe-24, Ser-43, Arg-44, Arg-45, and Lys-47. Residues Arg-61, Thr-96, and Phe-98 each coordinate L-isoleucine. Glu-153 and Lys-158 together coordinate GTP. A DNA-binding region (H-T-H motif) is located at residues 203-222; it reads ASKVADRVGITRSVIVNALR.

Belongs to the CodY family. As to quaternary structure, homodimer. Homotetramer. May form homodimers under conditions in which energy sources are sufficient (active state) and homotetramers under insufficient nutrient conditions (inactive state).

The protein resides in the cytoplasm. With respect to regulation, activity of CodY is modulated by interaction with two types of effectors: the branched-chain amino acids (BCAAs) leucine, isoleucine and valine, which are signals of the nutritional status of the cell, and GTP, which may signal the energetic status of the cell. DNA-binding global transcriptional regulator which is involved in the adaptive response to starvation and acts by directly or indirectly controlling the expression of numerous genes in response to nutrient availability. During rapid exponential growth, CodY is highly active and represses genes whose products allow adaptation to nutrient depletion. The chain is Global transcriptional regulator CodY from Staphylococcus aureus (strain Mu3 / ATCC 700698).